The chain runs to 184 residues: Large ribosomal subunit protein uL5 (184 aa).

It belongs to the universal ribosomal protein uL5 family. As to quaternary structure, part of the 50S ribosomal subunit; part of the 5S rRNA/L5/L18/L25 subcomplex. Contacts the 5S rRNA and the P site tRNA. Forms a bridge to the 30S subunit in the 70S ribosome.

Its function is as follows. This is one of the proteins that bind and probably mediate the attachment of the 5S RNA into the large ribosomal subunit, where it forms part of the central protuberance. In the 70S ribosome it contacts protein S13 of the 30S subunit (bridge B1b), connecting the 2 subunits; this bridge is implicated in subunit movement. Contacts the P site tRNA; the 5S rRNA and some of its associated proteins might help stabilize positioning of ribosome-bound tRNAs. This chain is Large ribosomal subunit protein uL5, found in Ureaplasma parvum serovar 3 (strain ATCC 27815 / 27 / NCTC 11736).